The following is a 360-amino-acid chain: Teichoic acids export ATP-binding protein TagH (360 aa).

The region spanning 24–245 is the ABC transporter domain; it reads LKAMFFPKTR…YEDYINWFNK (222 aa). 59-66 is a binding site for ATP; that stretch reads GINGSGKS. Residues 246-360 form a unknown region; sequence LSKEEKEAHK…GDIDNSDVSL (115 aa). Residues 270–290 form a disordered region; it reads EEQENGKAGSGGDGTQPIVQP.

Belongs to the ABC transporter superfamily. Teichoic acids exporter (TC 3.A.1.104.1) family. As to quaternary structure, the complex is composed of two ATP-binding proteins (TagH) and two transmembrane proteins (TagG).

Its subcellular location is the cell membrane. It catalyses the reaction ATP + H2O + teichoic acidSide 1 = ADP + phosphate + teichoic acidSide 2.. Its function is as follows. Part of the ABC transporter complex TagGH involved in teichoic acids export. Responsible for energy coupling to the transport system. The sequence is that of Teichoic acids export ATP-binding protein TagH from Shouchella clausii (strain KSM-K16) (Alkalihalobacillus clausii).